Consider the following 317-residue polypeptide: Glycine--tRNA ligase alpha subunit (317 aa).

It belongs to the class-II aminoacyl-tRNA synthetase family. As to quaternary structure, tetramer of two alpha and two beta subunits.

The protein resides in the cytoplasm. The enzyme catalyses tRNA(Gly) + glycine + ATP = glycyl-tRNA(Gly) + AMP + diphosphate. This is Glycine--tRNA ligase alpha subunit from Pseudomonas fluorescens (strain SBW25).